Consider the following 968-residue polypeptide: RNA polymerase-associated protein RapA (968 aa).

The region spanning 164-334 (DVGRRHAPRV…FARLRLLDPN (171 aa)) is the Helicase ATP-binding domain. 177–184 (DEVGLGKT) serves as a coordination point for ATP. The DEAH box signature appears at 280–283 (DEAH). The 196-residue stretch at 490-685 (RVEWLMGYLT…ALKAQLEQGR (196 aa)) folds into the Helicase C-terminal domain.

This sequence belongs to the SNF2/RAD54 helicase family. RapA subfamily. As to quaternary structure, interacts with the RNAP. Has a higher affinity for the core RNAP than for the holoenzyme. Its ATPase activity is stimulated by binding to RNAP.

In terms of biological role, transcription regulator that activates transcription by stimulating RNA polymerase (RNAP) recycling in case of stress conditions such as supercoiled DNA or high salt concentrations. Probably acts by releasing the RNAP, when it is trapped or immobilized on tightly supercoiled DNA. Does not activate transcription on linear DNA. Probably not involved in DNA repair. The polypeptide is RNA polymerase-associated protein RapA (Salmonella newport (strain SL254)).